The chain runs to 314 residues: L-lactate dehydrogenase (314 aa).

NAD(+) is bound by residues V17, D38, K43, Y69, and 83 to 84; that span reads GA. Q86 and R92 together coordinate substrate. Residues S105, 122 to 124, and S147 each bind NAD(+); that span reads ASN. 124 to 127 is a substrate binding site; it reads NPVD. 152–155 contributes to the substrate binding site; sequence DSAR. Residues R157 and H172 each contribute to the beta-D-fructose 1,6-bisphosphate site. The active-site Proton acceptor is H179. Y223 carries the phosphotyrosine modification. Position 232 (T232) interacts with substrate.

This sequence belongs to the LDH/MDH superfamily. LDH family. As to quaternary structure, homotetramer.

It is found in the cytoplasm. The catalysed reaction is (S)-lactate + NAD(+) = pyruvate + NADH + H(+). It functions in the pathway fermentation; pyruvate fermentation to lactate; (S)-lactate from pyruvate: step 1/1. Allosterically activated by fructose 1,6-bisphosphate (FBP). In terms of biological role, catalyzes the conversion of lactate to pyruvate. The polypeptide is L-lactate dehydrogenase (Corynebacterium glutamicum (strain R)).